The sequence spans 375 residues: Succinyl-diaminopimelate desuccinylase (375 aa).

Residue His-66 coordinates Zn(2+). Asp-68 is a catalytic residue. Residue Asp-99 coordinates Zn(2+). Glu-133 functions as the Proton acceptor in the catalytic mechanism. Residues Glu-134, Glu-162, and His-348 each coordinate Zn(2+).

It belongs to the peptidase M20A family. DapE subfamily. Homodimer. Zn(2+) is required as a cofactor. Requires Co(2+) as cofactor.

It carries out the reaction N-succinyl-(2S,6S)-2,6-diaminopimelate + H2O = (2S,6S)-2,6-diaminopimelate + succinate. It participates in amino-acid biosynthesis; L-lysine biosynthesis via DAP pathway; LL-2,6-diaminopimelate from (S)-tetrahydrodipicolinate (succinylase route): step 3/3. In terms of biological role, catalyzes the hydrolysis of N-succinyl-L,L-diaminopimelic acid (SDAP), forming succinate and LL-2,6-diaminopimelate (DAP), an intermediate involved in the bacterial biosynthesis of lysine and meso-diaminopimelic acid, an essential component of bacterial cell walls. The sequence is that of Succinyl-diaminopimelate desuccinylase from Klebsiella pneumoniae (strain 342).